The chain runs to 488 residues: uncharacterized protein (488 aa).

The protein resides in the cytoplasm. The protein localises to the nucleus. This is an uncharacterized protein from Schizosaccharomyces pombe (strain 972 / ATCC 24843) (Fission yeast).